A 394-amino-acid chain; its full sequence is Serine palmitoyltransferase (394 aa).

Pyridoxal 5'-phosphate contacts are provided by residues Gly111–Phe112, Ser183, His211, and Thr239. Lys242 bears the N6-(pyridoxal phosphate)lysine mark.

Belongs to the class-II pyridoxal-phosphate-dependent aminotransferase family. Pyridoxal 5'-phosphate is required as a cofactor.

It carries out the reaction L-serine + hexadecanoyl-CoA + H(+) = 3-oxosphinganine + CO2 + CoA. It functions in the pathway lipid metabolism; sphingolipid metabolism. Its function is as follows. Involved in de novo bacterial ceramide synthesis. Catalyzes the condensation of L-serine with palmitoyl-CoA (hexadecanoyl-CoA) to produce 3-oxosphinganine. Also capable of using alanine as substrate leading to the formation of 1-deoxysphinganine (1-deoxySa). Contributes to the levels of endogenous sphingolipids in its host. The protein is Serine palmitoyltransferase of Bacteroides thetaiotaomicron (strain ATCC 29148 / DSM 2079 / JCM 5827 / CCUG 10774 / NCTC 10582 / VPI-5482 / E50).